Consider the following 281-residue polypeptide: 2,3,4,5-tetrahydropyridine-2,6-dicarboxylate N-succinyltransferase (281 aa).

2 residues coordinate substrate: Arg108 and Asp145.

It belongs to the transferase hexapeptide repeat family. As to quaternary structure, homotrimer.

It localises to the cytoplasm. The catalysed reaction is (S)-2,3,4,5-tetrahydrodipicolinate + succinyl-CoA + H2O = (S)-2-succinylamino-6-oxoheptanedioate + CoA. Its pathway is amino-acid biosynthesis; L-lysine biosynthesis via DAP pathway; LL-2,6-diaminopimelate from (S)-tetrahydrodipicolinate (succinylase route): step 1/3. The polypeptide is 2,3,4,5-tetrahydropyridine-2,6-dicarboxylate N-succinyltransferase (Rhodopseudomonas palustris (strain BisB5)).